Reading from the N-terminus, the 450-residue chain is uncharacterized protein (450 aa).

12 helical membrane passes run 10 to 30 (IIVL…LVIA), 53 to 73 (LGGG…AIAI), 95 to 115 (TAGN…LFAI), 120 to 140 (LLPV…SIFN), 148 to 168 (AVAC…PVGF), 199 to 219 (LAML…IFIT), 242 to 262 (IANI…ATFA), 267 to 287 (TSST…CGIF), 302 to 322 (LMAM…VINA), 343 to 363 (IAAL…GSSF), 378 to 398 (LSFG…AALG), and 428 to 448 (VVPT…IAAM).

Its subcellular location is the cell membrane. This is an uncharacterized protein from Haemophilus influenzae (strain ATCC 51907 / DSM 11121 / KW20 / Rd).